Consider the following 158-residue polypeptide: NADH-quinone oxidoreductase subunit B (158 aa).

[4Fe-4S] cluster contacts are provided by Cys-37, Cys-38, Cys-102, and Cys-132.

The protein belongs to the complex I 20 kDa subunit family. NDH-1 is composed of 14 different subunits. Subunits NuoB, C, D, E, F, and G constitute the peripheral sector of the complex. The cofactor is [4Fe-4S] cluster.

The protein resides in the cell inner membrane. It catalyses the reaction a quinone + NADH + 5 H(+)(in) = a quinol + NAD(+) + 4 H(+)(out). In terms of biological role, NDH-1 shuttles electrons from NADH, via FMN and iron-sulfur (Fe-S) centers, to quinones in the respiratory chain. Couples the redox reaction to proton translocation (for every two electrons transferred, four hydrogen ions are translocated across the cytoplasmic membrane), and thus conserves the redox energy in a proton gradient. This Dechloromonas aromatica (strain RCB) protein is NADH-quinone oxidoreductase subunit B.